The primary structure comprises 252 residues: Imidazole glycerol phosphate synthase subunit HisF (252 aa).

Active-site residues include aspartate 11 and aspartate 130.

This sequence belongs to the HisA/HisF family. As to quaternary structure, heterodimer of HisH and HisF.

The protein resides in the cytoplasm. The enzyme catalyses 5-[(5-phospho-1-deoxy-D-ribulos-1-ylimino)methylamino]-1-(5-phospho-beta-D-ribosyl)imidazole-4-carboxamide + L-glutamine = D-erythro-1-(imidazol-4-yl)glycerol 3-phosphate + 5-amino-1-(5-phospho-beta-D-ribosyl)imidazole-4-carboxamide + L-glutamate + H(+). The protein operates within amino-acid biosynthesis; L-histidine biosynthesis; L-histidine from 5-phospho-alpha-D-ribose 1-diphosphate: step 5/9. IGPS catalyzes the conversion of PRFAR and glutamine to IGP, AICAR and glutamate. The HisF subunit catalyzes the cyclization activity that produces IGP and AICAR from PRFAR using the ammonia provided by the HisH subunit. This Thermococcus onnurineus (strain NA1) protein is Imidazole glycerol phosphate synthase subunit HisF.